A 138-amino-acid chain; its full sequence is Large ribosomal subunit protein uL16 (138 aa).

The segment covering 1 to 13 (MLQPKRRKYRKEQ) has biased composition (basic residues). The tract at residues 1–24 (MLQPKRRKYRKEQKGRNTGKATRG) is disordered.

The protein belongs to the universal ribosomal protein uL16 family. As to quaternary structure, part of the 50S ribosomal subunit.

In terms of biological role, binds 23S rRNA and is also seen to make contacts with the A and possibly P site tRNAs. In Burkholderia multivorans (strain ATCC 17616 / 249), this protein is Large ribosomal subunit protein uL16.